Reading from the N-terminus, the 629-residue chain is Embryonic polyadenylate-binding protein A (629 aa).

4 RRM domains span residues 11–89, 99–175, 191–268, and 294–370; these read ASLY…WSQR, GNVF…HFKS, TNVY…RAQK, and VNLY…LAQR. The 78-residue stretch at 539–616 folds into the PABC domain; it reads QEPLTASLLA…AVAVLQAHQA (78 aa).

The protein belongs to the polyadenylate-binding protein type-1 family. Interacts with dazl in an RNA-independent manner. The C-terminus can self-associate and also interact with the C-terminus of pabpc1, independently of RNA. RRM 1 and RRM 2 interact with both eif4g1 and paip1, and the C-terminus also interacts with paip1. Prior to oocyte maturation, found in a complex with dazl and pum2 proteins and spdy1 mRNA; pum2 dissociates from the complex during maturation. Interacts with the translation termination factor sup35/erf3. Expressed in adult testis, but at a reduced level compared to oocytes.

The protein localises to the cytoplasm. Binds and protects the poly(A) tail of mRNA with or without an AU-rich element (ARE) and prevents mRNA deadenylation. Stimulates the translation of mRNAs to which it is bound during early development. The protein is Embryonic polyadenylate-binding protein A (epabp-a) of Xenopus laevis (African clawed frog).